The sequence spans 74 residues: Kappa-stichotoxin-Shd5a (74 aa).

The signal sequence occupies residues 1 to 22; that stretch reads MKFQVIAAVLLIAFCLCVVVTA. Positions 23–39 are excised as a propeptide; sequence RMELQDVEDVENGFQKR. Residues 42–74 form the ShKT domain; the sequence is CIDTIPQSRCTAFQCKHSMKYRLSFCRKTCGTC. 3 cysteine pairs are disulfide-bonded: cysteine 42/cysteine 74, cysteine 51/cysteine 67, and cysteine 56/cysteine 71.

The protein belongs to the sea anemone type 1 potassium channel toxin family. Type 1a subfamily.

It localises to the secreted. The protein localises to the nematocyst. Functionally, inhibits voltage-gated potassium channels (Kv) with higher potency for Kv1.1/KCNA1 and Kv1.3/KCNA3. This chain is Kappa-stichotoxin-Shd5a, found in Stichodactyla haddoni (Saddle carpet anemone).